The following is a 386-amino-acid chain: 4-hydroxy-3-methylbut-2-en-1-yl diphosphate synthase (flavodoxin) (386 aa).

Positions 289, 292, 324, and 331 each coordinate [4Fe-4S] cluster.

The protein belongs to the IspG family. [4Fe-4S] cluster is required as a cofactor.

The catalysed reaction is (2E)-4-hydroxy-3-methylbut-2-enyl diphosphate + oxidized [flavodoxin] + H2O + 2 H(+) = 2-C-methyl-D-erythritol 2,4-cyclic diphosphate + reduced [flavodoxin]. The protein operates within isoprenoid biosynthesis; isopentenyl diphosphate biosynthesis via DXP pathway; isopentenyl diphosphate from 1-deoxy-D-xylulose 5-phosphate: step 5/6. Functionally, converts 2C-methyl-D-erythritol 2,4-cyclodiphosphate (ME-2,4cPP) into 1-hydroxy-2-methyl-2-(E)-butenyl 4-diphosphate. The protein is 4-hydroxy-3-methylbut-2-en-1-yl diphosphate synthase (flavodoxin) of Nitratidesulfovibrio vulgaris (strain ATCC 29579 / DSM 644 / CCUG 34227 / NCIMB 8303 / VKM B-1760 / Hildenborough) (Desulfovibrio vulgaris).